The chain runs to 383 residues: uncharacterized protein (383 aa).

In terms of domain architecture, YcaO spans 58–383; that stretch reads GKGATRTQAR…RVGRRIRSSI (326 aa). Positions 80-100 are disordered; the sequence is AERKPEDETFTAHPEDCDGLD.

This is an uncharacterized protein from Methanothermobacter thermautotrophicus (strain ATCC 29096 / DSM 1053 / JCM 10044 / NBRC 100330 / Delta H) (Methanobacterium thermoautotrophicum).